The primary structure comprises 345 residues: Sorting nexin-15 (345 aa).

The region spanning 1–130 (MSRQAKDDFL…EFFRGGEVTR (130 aa)) is the PX domain. Arg-105 is subject to Omega-N-methylarginine. The disordered stretch occupies residues 133–163 (EVSGDLHILPPPLIPTPPPDEPRVQPHETWL). Over residues 141-151 (LPPPLIPTPPP) the composition is skewed to pro residues. Phosphoserine occurs at positions 208 and 234. Residues 226 to 274 (SKEEGAGPSPTHIGELAALEAGSGRPDQEPWEPGGQAEEDDEEGEPAPA) form a disordered region. The MIT domain occupies 272-345 (APAYLSQATE…AEEILHLHLS (74 aa)).

The protein belongs to the sorting nexin family.

Its function is as follows. May be involved in several stages of intracellular trafficking. Overexpression of SNX15 disrupts the normal trafficking of proteins from the plasma membrane to recycling endosomes or the TGN. The sequence is that of Sorting nexin-15 (SNX15) from Bos taurus (Bovine).